A 137-amino-acid chain; its full sequence is Large ribosomal subunit protein uL16 (137 aa).

This sequence belongs to the universal ribosomal protein uL16 family. As to quaternary structure, part of the 50S ribosomal subunit.

In terms of biological role, binds 23S rRNA and is also seen to make contacts with the A and possibly P site tRNAs. The protein is Large ribosomal subunit protein uL16 of Francisella tularensis subsp. tularensis (strain FSC 198).